A 212-amino-acid polypeptide reads, in one-letter code: MAIGVVGRKAGMTRIFTDEGQALPVTVIEVEPNRITQLKTLESDGYRAVQVTVGSRRSSRVNKAAAGHFAKAGVEAGRGVWEFRLADGEGEDLAAGGELTVSVFEDGQVVDAVGQSKGKGFQGGVKRWNFSMQDATHGNSLSHRAPGSIGQNQTPGKVFKGKKMAGQMGNAQVTVQNLKIVRVDAERNLLLVSGAVPGATGGDVVIKPAVKA.

Q153 bears the N5-methylglutamine mark.

Belongs to the universal ribosomal protein uL3 family. As to quaternary structure, part of the 50S ribosomal subunit. Forms a cluster with proteins L14 and L19. In terms of processing, methylated by PrmB.

One of the primary rRNA binding proteins, it binds directly near the 3'-end of the 23S rRNA, where it nucleates assembly of the 50S subunit. The chain is Large ribosomal subunit protein uL3 from Marinobacter nauticus (strain ATCC 700491 / DSM 11845 / VT8) (Marinobacter aquaeolei).